Here is a 250-residue protein sequence, read N- to C-terminus: Transmembrane ascorbate-dependent reductase CYB561 (250 aa).

Met1 is modified (N-acetylmethionine). Over 1–15 the chain is Cytoplasmic; sequence MEHSSASVPAALPYY. A helical transmembrane segment spans residues 16 to 36; it reads VAFSQLLGLTVVAVTGAWLGL. Residues 18-219 enclose the Cytochrome b561 domain; that stretch reads FSQLLGLTVV…FGVVVLYILA (202 aa). Topologically, residues 37–50 are vesicular; that stretch reads YRGGIAWESSLQFN. The chain crosses the membrane as a helical span at residues 51 to 71; it reads VHPLCMVIGMIFLQGDALLVY. 3 residues coordinate heme b: His52, Arg72, and Lys79. Topologically, residues 72 to 83 are cytoplasmic; that stretch reads RVFRREAKRTTK. The L-ascorbate site is built by Lys79 and Lys83. The helical transmembrane segment at 84–104 threads the bilayer; the sequence is ILHGLLHVFAFIIALVGLVAV. Heme b is bound by residues His86, 115-118, and His120; that span reads DLYS. Topologically, residues 105 to 123 are vesicular; sequence FDYHKKKGYADLYSLHSWC. The chain crosses the membrane as a helical span at residues 124 to 144; the sequence is GILVFVLYFVQWLVGFSFFLF. At 145–157 the chain is on the cytoplasmic side; it reads PGASFSLRSRYRP. Arg152 is an L-ascorbate binding site. Residues 158-178 form a helical membrane-spanning segment; it reads QHIFFGATIFLFSVGTALLGL. Heme b-binding residues include His159 and Glu180. Residues 179 to 197 lie on the Vesicular side of the membrane; the sequence is KEALLFKLGSKYSTFEPEG. A helical transmembrane segment spans residues 198-218; the sequence is VLANVLGLLLVCFGVVVLYIL. Residues 219–250 lie on the Cytoplasmic side of the membrane; that stretch reads AQADWKRPSQAEEQALSMDFKTLTEGDSPSPQ. Lys224 contacts heme b. A phosphoserine mark is found at Ser246 and Ser248.

Heme b is required as a cofactor. Abundantly distributed in a number of neuroendocrine tissues.

The protein resides in the cytoplasmic vesicle. It is found in the secretory vesicle. The protein localises to the chromaffin granule membrane. It catalyses the reaction monodehydro-L-ascorbate radical(out) + L-ascorbate(in) = monodehydro-L-ascorbate radical(in) + L-ascorbate(out). Transmembrane reductase that uses ascorbate as an electron donor in the cytoplasm and transfers electrons across membranes to reduce monodehydro-L-ascorbate radical in the lumen of secretory vesicles. It is therefore involved the regeneration and homeostasis within secretory vesicles of ascorbate which in turn provides reducing equivalents needed to support the activity of intravesicular enzymes. This is Transmembrane ascorbate-dependent reductase CYB561 from Mus musculus (Mouse).